The following is a 219-amino-acid chain: Ribose-5-phosphate isomerase A (219 aa).

Substrate is bound by residues 28 to 31 (TGST), 81 to 84 (DGAD), and 94 to 97 (KGGG). Glutamate 103 (proton acceptor) is an active-site residue. Lysine 121 contributes to the substrate binding site.

Belongs to the ribose 5-phosphate isomerase family. As to quaternary structure, homodimer.

It catalyses the reaction aldehydo-D-ribose 5-phosphate = D-ribulose 5-phosphate. It participates in carbohydrate degradation; pentose phosphate pathway; D-ribose 5-phosphate from D-ribulose 5-phosphate (non-oxidative stage): step 1/1. In terms of biological role, catalyzes the reversible conversion of ribose-5-phosphate to ribulose 5-phosphate. In Edwardsiella ictaluri (strain 93-146), this protein is Ribose-5-phosphate isomerase A.